The following is a 332-amino-acid chain: Beta-1,3-N-acetylglucosaminyltransferase radical fringe (332 aa).

At 1-6 the chain is on the cytoplasmic side; that stretch reads MSRARR. The chain crosses the membrane as a helical; Signal-anchor for type II membrane protein span at residues 7–29; that stretch reads VLCRACLALAAVLAVLLLLPLPL. At 30–332 the chain is on the lumenal side; that stretch reads PLPLPRAPAP…MKNRVEGAFQ (303 aa). Arg-75 is a binding site for substrate. An N-linked (GlcNAc...) asparagine glycan is attached at Asn-114. 2 cysteine pairs are disulfide-bonded: Cys-115/Cys-126 and Cys-144/Cys-208. Asp-148 serves as a coordination point for substrate. Asp-149 serves as a coordination point for Mn(2+). Residue Asp-238 is part of the active site. His-262 lines the Mn(2+) pocket. A disulfide bridge links Cys-312 with Cys-321.

The protein belongs to the glycosyltransferase 31 family. Mn(2+) is required as a cofactor. In terms of tissue distribution, detected in all the examined tissues (12.5 dpc). High expression found in adult brain.

It is found in the golgi apparatus membrane. It catalyses the reaction 3-O-(alpha-L-fucosyl)-L-threonyl-[EGF-like domain protein] + UDP-N-acetyl-alpha-D-glucosamine = 3-O-(N-acetyl-beta-D-glucosaminyl-(1-&gt;3)-alpha-L-fucosyl)-L-threonyl-[EGF-like domain protein] + UDP + H(+). It carries out the reaction 3-O-(alpha-L-fucosyl)-L-seryl-[EGF-like domain protein] + UDP-N-acetyl-alpha-D-glucosamine = 3-O-(N-acetyl-beta-D-glucosaminyl-(1-&gt;3)-alpha-L-fucosyl)-L-seryl-[EGF-like domain protein] + UDP + H(+). Its function is as follows. Glycosyltransferase that initiates the elongation of O-linked fucose residues attached to EGF-like repeats in the extracellular domain of Notch molecules. Modulates NOTCH1 activity by modifying O-fucose residues at specific EGF-like domains resulting in enhancement of NOTCH1 activation by DLL1 and JAG1. May be involved in limb formation and in neurogenesis. The protein is Beta-1,3-N-acetylglucosaminyltransferase radical fringe of Mus musculus (Mouse).